The primary structure comprises 908 residues: Translation initiation factor IF-2 (908 aa).

The segment at 145-312 is disordered; it reads EIPGLTQRAK…KGKKRQAEKI (168 aa). Residues 167 to 177 are compositionally biased toward basic and acidic residues; it reads VVERPEARPSA. 2 stretches are compositionally biased toward low complexity: residues 194-217 and 263-276; these read RPEG…PRPG and VAGA…GAAV. The segment covering 278–296 has biased composition (basic and acidic residues); it reads KRKEEFKKTELFEKHERVF. In terms of domain architecture, tr-type G spans 408–577; it reads KRPPVVTIMG…LLQADVLELK (170 aa). The tract at residues 417–424 is G1; that stretch reads GHVDHGKT. Residue 417-424 coordinates GTP; that stretch reads GHVDHGKT. The segment at 442–446 is G2; that stretch reads GITQH. Positions 463–466 are G3; it reads DTPG. GTP contacts are provided by residues 463–467 and 517–520; these read DTPGH and NKID. Residues 517 to 520 are G4; it reads NKID. The interval 553–555 is G5; the sequence is SAK.

It belongs to the TRAFAC class translation factor GTPase superfamily. Classic translation factor GTPase family. IF-2 subfamily.

It localises to the cytoplasm. Its function is as follows. One of the essential components for the initiation of protein synthesis. Protects formylmethionyl-tRNA from spontaneous hydrolysis and promotes its binding to the 30S ribosomal subunits. Also involved in the hydrolysis of GTP during the formation of the 70S ribosomal complex. In Geotalea daltonii (strain DSM 22248 / JCM 15807 / FRC-32) (Geobacter daltonii), this protein is Translation initiation factor IF-2.